The sequence spans 388 residues: Succinate--CoA ligase [ADP-forming] subunit beta (388 aa).

An ATP-grasp domain is found at 9–244 (KQIFAEYQLP…PSQEDPREAL (236 aa)). Residues lysine 46, 53–55 (GRG), glutamate 99, serine 102, and glutamate 107 contribute to the ATP site. Positions 199 and 213 each coordinate Mg(2+). Residues asparagine 264 and 321 to 323 (GIV) contribute to the substrate site.

This sequence belongs to the succinate/malate CoA ligase beta subunit family. In terms of assembly, heterotetramer of two alpha and two beta subunits. Mg(2+) is required as a cofactor.

The catalysed reaction is succinate + ATP + CoA = succinyl-CoA + ADP + phosphate. The enzyme catalyses GTP + succinate + CoA = succinyl-CoA + GDP + phosphate. It participates in carbohydrate metabolism; tricarboxylic acid cycle; succinate from succinyl-CoA (ligase route): step 1/1. In terms of biological role, succinyl-CoA synthetase functions in the citric acid cycle (TCA), coupling the hydrolysis of succinyl-CoA to the synthesis of either ATP or GTP and thus represents the only step of substrate-level phosphorylation in the TCA. The beta subunit provides nucleotide specificity of the enzyme and binds the substrate succinate, while the binding sites for coenzyme A and phosphate are found in the alpha subunit. In Pasteurella multocida (strain Pm70), this protein is Succinate--CoA ligase [ADP-forming] subunit beta.